A 651-amino-acid chain; its full sequence is MGQIFSRSASPIPRPPRGLAAHHWLNFLQAAYRLEPGPSSYDFHQLKKFLKIALETPVWICPINYSLLASLLPKGYPGRVNEILHILIQTQAQIPSRPAPPPPSSSTHDPPDSDPQIPPPYVEPTAPQVLPVMHPHGAPPNHRPWQMKDLQAIKQEVSQAAPGSPQFMQTIRLAVQQFDPTAKDLQDLLQYLCSSLVASLHHQQLDSLISEAETRGITGYNPLAGPLRVQANNPQQQGLRREYQQLWLAAFAALPGSAKDPSWASILQGLEEPYHAFVERLNIALDNGLPEGTPKDPILRSLAYSNANKECQKLLQARGHTNSPLGDMLRACQAWTPKDKTKVLVVQPKKPPPNQPCFRCGKAGHWSRDCTQPRPPPGPCPLCQDPTHWKRDCPRLKPTIPEPEPEEDALLLDLPADIPHPKNLHRGGGLTSPPTLQQVLPNQDPTSILPVIPLDPARRPVIKAQIDTQTSHPKTIEALLDTGADMTVLPIALFSSNTPLKNTSVLGAGGQTQDHFKLTSLPVLIRLPFRTTPIVLTSCLVDTKNNWAIIGRDALQQCQGVLYLPEAKRPPVILPIQAPAVLGLEHLPRPPEISQFPLNQNASRPCNTWSGRPWRQAISNPTPGQEITQYSQLKKPMEPGDSSTTCGPLTL.

Residue Gly2 is the site of N-myristoyl glycine; by host attachment. The tract at residues 93-142 (QIPSRPAPPPPSSSTHDPPDSDPQIPPPYVEPTAPQVLPVMHPHGAPPNH) is disordered. A Phosphoserine; by host MAPK1 modification is found at Ser105. The short motif at 118 to 121 (PPPY) is the PPXY motif element. Positions 124–127 (PTAP) match the PTAP/PSAP motif motif. 2 consecutive CCHC-type zinc fingers follow at residues 355 to 372 (QPCFRCGKAGHWSRDCTQ) and 378 to 395 (GPCPLCQDPTHWKRDCPR). A Peptidase A2 domain is found at 476-554 (IEALLDTGAD…NNWAIIGRDA (79 aa)). The For protease activity; shared with dimeric partner role is filled by Asp481. Residues 631–651 (SQLKKPMEPGDSSTTCGPLTL) are disordered. The span at 641-651 (DSSTTCGPLTL) shows a compositional bias: polar residues.

Homodimer; the homodimers are part of the immature particles. Interacts with human TSG101 and NEDD4; these interactions are essential for budding and release of viral particles. As to quaternary structure, homodimer; further assembles as homohexamers. Post-translationally, specific enzymatic cleavages by the viral protease yield mature proteins. The polyprotein is cleaved during and after budding, this process is termed maturation. The protease is autoproteolytically processed at its N- and C-termini. Phosphorylation of the matrix protein p19 by MAPK1 seems to play a role in budding. In terms of processing, myristoylated. Myristoylation of the matrix (MA) domain mediates the transport and binding of Gag polyproteins to the host plasma membrane and is required for the assembly of viral particles.

It is found in the virion. Functionally, the matrix domain targets Gag, Gag-Pro and Gag-Pro-Pol polyproteins to the plasma membrane via a multipartite membrane binding signal, that includes its myristoylated N-terminus. In terms of biological role, matrix protein. Forms the spherical core of the virus that encapsulates the genomic RNA-nucleocapsid complex. Its function is as follows. Binds strongly to viral nucleic acids and promote their aggregation. Also destabilizes the nucleic acids duplexes via highly structured zinc-binding motifs. Functionally, the aspartyl protease mediates proteolytic cleavages of Gag and Gag-Pol polyproteins during or shortly after the release of the virion from the plasma membrane. Cleavages take place as an ordered, step-wise cascade to yield mature proteins. This process is called maturation. Displays maximal activity during the budding process just prior to particle release from the cell (Potential). Cleaves the translation initiation factor eIF4G leading to the inhibition of host cap-dependent translation. The chain is Gag-Pro polyprotein (gag-pro) from Human T-cell leukemia virus 1 (isolate Caribbea HS-35 subtype A) (HTLV-1).